The following is a 545-amino-acid chain: Glucose-6-phosphate isomerase 1 (545 aa).

The Proton donor role is filled by Glu356. Residues His387 and Lys508 contribute to the active site.

This sequence belongs to the GPI family.

It localises to the cytoplasm. It catalyses the reaction alpha-D-glucose 6-phosphate = beta-D-fructose 6-phosphate. Its pathway is carbohydrate biosynthesis; gluconeogenesis. It participates in carbohydrate degradation; glycolysis; D-glyceraldehyde 3-phosphate and glycerone phosphate from D-glucose: step 2/4. In terms of biological role, catalyzes the reversible isomerization of glucose-6-phosphate to fructose-6-phosphate. The polypeptide is Glucose-6-phosphate isomerase 1 (Cupriavidus pinatubonensis (strain JMP 134 / LMG 1197) (Cupriavidus necator (strain JMP 134))).